The sequence spans 478 residues: Aspartyl/glutamyl-tRNA(Asn/Gln) amidotransferase subunit B (478 aa).

Belongs to the GatB/GatE family. GatB subfamily. As to quaternary structure, heterotrimer of A, B and C subunits.

It catalyses the reaction L-glutamyl-tRNA(Gln) + L-glutamine + ATP + H2O = L-glutaminyl-tRNA(Gln) + L-glutamate + ADP + phosphate + H(+). The catalysed reaction is L-aspartyl-tRNA(Asn) + L-glutamine + ATP + H2O = L-asparaginyl-tRNA(Asn) + L-glutamate + ADP + phosphate + 2 H(+). Its function is as follows. Allows the formation of correctly charged Asn-tRNA(Asn) or Gln-tRNA(Gln) through the transamidation of misacylated Asp-tRNA(Asn) or Glu-tRNA(Gln) in organisms which lack either or both of asparaginyl-tRNA or glutaminyl-tRNA synthetases. The reaction takes place in the presence of glutamine and ATP through an activated phospho-Asp-tRNA(Asn) or phospho-Glu-tRNA(Gln). This chain is Aspartyl/glutamyl-tRNA(Asn/Gln) amidotransferase subunit B, found in Brevibacillus brevis (strain 47 / JCM 6285 / NBRC 100599).